The following is a 69-amino-acid chain: Microcin H47 immunity protein MchI (69 aa).

At 1–6 the chain is on the cytoplasmic side; that stretch reads MSYKKL. The chain crosses the membrane as a helical span at residues 7–29; the sequence is YQLTAIFSLPLTILLVSLSSLRI. Topologically, residues 30 to 38 are periplasmic; sequence VGEGNSYVD. Residues 39–61 form a helical membrane-spanning segment; it reads VFLSFIIFLGFIELIHGIRKILV. Residues 62–69 are Cytoplasmic-facing; it reads WSGWKNGS.

Its subcellular location is the cell membrane. Its function is as follows. Protects a microcin H47-producer cell against microcin H47. This is Microcin H47 immunity protein MchI (mchI) from Escherichia coli.